The following is a 284-amino-acid chain: Four and a half LIM domains protein 5 (284 aa).

A C4-type zinc finger spans residues cysteine 8–cysteine 32. LIM zinc-binding domains follow at residues asparagine 39–serine 100, lysine 101–alanine 160, histidine 161–asparagine 220, and valine 223–aspartate 283.

In terms of assembly, interacts with CREM (via the third LIM domain). Interacts (via second LIM domain) with SPAG8. As to expression, testis-specific (at protein level).

Its subcellular location is the nucleus. Its function is as follows. May be involved in the regulation of spermatogenesis. Stimulates CREM transcriptional activity in a phosphorylation-independent manner. The sequence is that of Four and a half LIM domains protein 5 (FHL5) from Homo sapiens (Human).